Reading from the N-terminus, the 1755-residue chain is Transposon Ty1-DR6 Gag-Pol polyprotein (1755 aa).

3 stretches are compositionally biased toward polar residues: residues 1 to 23 (MESQQLSQHSPISHGSACASVTS), 48 to 60 (TKANSQQTTTPAS), and 127 to 152 (QSQFPQYPSSVGTPLSTPSPESGNTF). Disordered stretches follow at residues 1–93 (MESQ…MMTQ), 126–174 (PQSQ…PPPM), and 352–421 (GSRN…SKST). Residues 153 to 165 (TDSSSADSDMTST) are compositionally biased toward low complexity. Positions 299-401 (NNGIHINNKV…NSKSKTARAH (103 aa)) are RNA-binding. Residues 402-418 (NVSTSNNSPSTDNDSIS) show a composition bias toward low complexity. Ser416 bears the Phosphoserine mark. Asp461 functions as the For protease activity; shared with dimeric partner in the catalytic mechanism. The integrase-type zinc finger-like stretch occupies residues 583–640 (NVHTSESTRKYPYPFIHRMLAHANAQTIRYSLKNNTITYFNESDVDWSSAIDYQCPDC). Positions 660-835 (NSYEPFQYLH…AGLDISTLLP (176 aa)) constitute an Integrase catalytic domain. Mg(2+)-binding residues include Asp671 and Asp736. Disordered regions lie at residues 956–1087 (SKAV…ETEK), 1092–1111 (RSPSIDASPPENNSSHNIVP), and 1130–1187 (DLPL…DNET). Residues 960–969 (SPTDSTPPST) are compositionally biased toward low complexity. Residues 1005-1015 (STPQISNIEST) show a composition bias toward polar residues. The span at 1038–1053 (ESSHASKSKDFRHSDS) shows a compositional bias: basic and acidic residues. 2 stretches are compositionally biased toward polar residues: residues 1054-1082 (YSENETNHTNVPISSTGGTNNKTVPQISD) and 1101-1111 (PENNSSHNIVP). The Bipartite nuclear localization signal motif lies at 1178–1212 (KKRSLEDNETEIKVSRDTWNTKNMRSLEPPRSKKR). The 139-residue stretch at 1338-1476 (NNYYITQLDI…DILGLEIKYQ (139 aa)) folds into the Reverse transcriptase Ty1/copia-type domain. Mg(2+) is bound by residues Asp1346, Asp1427, Asp1428, Asp1610, Glu1652, and Asp1685. The RNase H Ty1/copia-type domain occupies 1610–1752 (DASYGNQPYY…IKTFKLLTNK (143 aa)).

In terms of assembly, the capsid protein forms a homotrimer, from which the VLPs are assembled. The protease is a homodimer, whose active site consists of two apposed aspartic acid residues. Initially, virus-like particles (VLPs) are composed of the structural unprocessed proteins Gag and Gag-Pol, and also contain the host initiator methionine tRNA (tRNA(i)-Met) which serves as a primer for minus-strand DNA synthesis, and a dimer of genomic Ty RNA. Processing of the polyproteins occurs within the particle and proceeds by an ordered pathway, called maturation. First, the protease (PR) is released by autocatalytic cleavage of the Gag-Pol polyprotein yielding capsid protein p45 and a Pol-p154 precursor protein. This cleavage is a prerequisite for subsequent processing of Pol-p154 at the remaining sites to release the mature structural and catalytic proteins. Maturation takes place prior to the RT reaction and is required to produce transposition-competent VLPs.

It is found in the cytoplasm. Its subcellular location is the nucleus. It catalyses the reaction DNA(n) + a 2'-deoxyribonucleoside 5'-triphosphate = DNA(n+1) + diphosphate. The catalysed reaction is Endonucleolytic cleavage to 5'-phosphomonoester.. Its function is as follows. Capsid protein (CA) is the structural component of the virus-like particle (VLP), forming the shell that encapsulates the retrotransposons dimeric RNA genome. The particles are assembled from trimer-clustered units and there are holes in the capsid shells that allow for the diffusion of macromolecules. CA also has nucleocapsid-like chaperone activity, promoting primer tRNA(i)-Met annealing to the multipartite primer-binding site (PBS), dimerization of Ty1 RNA and initiation of reverse transcription. Functionally, the aspartyl protease (PR) mediates the proteolytic cleavages of the Gag and Gag-Pol polyproteins after assembly of the VLP. In terms of biological role, reverse transcriptase/ribonuclease H (RT) is a multifunctional enzyme that catalyzes the conversion of the retro-elements RNA genome into dsDNA within the VLP. The enzyme displays a DNA polymerase activity that can copy either DNA or RNA templates, and a ribonuclease H (RNase H) activity that cleaves the RNA strand of RNA-DNA heteroduplexes during plus-strand synthesis and hydrolyzes RNA primers. The conversion leads to a linear dsDNA copy of the retrotransposon that includes long terminal repeats (LTRs) at both ends. Integrase (IN) targets the VLP to the nucleus, where a subparticle preintegration complex (PIC) containing at least integrase and the newly synthesized dsDNA copy of the retrotransposon must transit the nuclear membrane. Once in the nucleus, integrase performs the integration of the dsDNA into the host genome. The chain is Transposon Ty1-DR6 Gag-Pol polyprotein (TY1B-DR6) from Saccharomyces cerevisiae (strain ATCC 204508 / S288c) (Baker's yeast).